Reading from the N-terminus, the 558-residue chain is Aspartate--tRNA ligase 2, cytoplasmic (558 aa).

A compositionally biased stretch (low complexity) spans 1-18 (MSSESEIPPLSSSTAAAE). The interval 1–57 (MSSESEIPPLSSSTAAAEESGEKTSKKAAKKEAAKLEKLRRRQEQEEATRRTASISL) is disordered. At Ser2 the chain carries N-acetylserine. The span at 20–50 (SGEKTSKKAAKKEAAKLEKLRRRQEQEEATR) shows a compositional bias: basic and acidic residues. The OB DNA-binding region spans 110-195 (VLIRGRVHTN…QVEIQVRKVY (86 aa)). Glu286 provides a ligand contact to L-aspartate. The aspartate stretch occupies residues 308–311 (QLHK). Arg330 is an L-aspartate binding site. Residues 330 to 332 (RAE), 338 to 340 (RHL), and Glu481 each bind ATP. The Mg(2+) site is built by Glu481 and Ser484. 2 residues coordinate L-aspartate: Ser484 and Arg488. 529–532 (GLER) serves as a coordination point for ATP.

Belongs to the class-II aminoacyl-tRNA synthetase family. Type 2 subfamily.

Its subcellular location is the cytoplasm. The protein resides in the cytosol. It localises to the endoplasmic reticulum. The catalysed reaction is tRNA(Asp) + L-aspartate + ATP = L-aspartyl-tRNA(Asp) + AMP + diphosphate. Catalyzes the specific attachment of an amino acid to its cognate tRNA in a 2 step reaction: the amino acid (AA) is first activated by ATP to form AA-AMP and then transferred to the acceptor end of the tRNA. Involved in the perception of beta-aminobutyric acid (BABA) and required for BABA priming effect in disease resistance. The polypeptide is Aspartate--tRNA ligase 2, cytoplasmic (Arabidopsis thaliana (Mouse-ear cress)).